We begin with the raw amino-acid sequence, 285 residues long: Energy-coupling factor transporter ATP-binding protein EcfA2 (285 aa).

The 243-residue stretch at 3-245 folds into the ABC transporter domain; it reads IKFKKVDYIY…RKWLKKHNLS (243 aa). Residue 40 to 47 participates in ATP binding; the sequence is GHTGSGKS.

Belongs to the ABC transporter superfamily. Energy-coupling factor EcfA family. As to quaternary structure, forms a stable energy-coupling factor (ECF) transporter complex composed of 2 membrane-embedded substrate-binding proteins (S component), 2 ATP-binding proteins (A component) and 2 transmembrane proteins (T component).

Its subcellular location is the cell membrane. ATP-binding (A) component of a common energy-coupling factor (ECF) ABC-transporter complex. Unlike classic ABC transporters this ECF transporter provides the energy necessary to transport a number of different substrates. In Lactobacillus acidophilus (strain ATCC 700396 / NCK56 / N2 / NCFM), this protein is Energy-coupling factor transporter ATP-binding protein EcfA2.